The sequence spans 74 residues: Protein CbbQ (74 aa).

Residue 41 to 48 participates in ATP binding; the sequence is GPTGCGKT.

Belongs to the CbbQ/NirQ/NorQ/GpvN family.

Its function is as follows. May affect the post-translational activation and/or assembly of the oligomeric structure of RuBisCO. This chain is Protein CbbQ (cbbQ), found in Allochromatium vinosum (Chromatium vinosum).